Reading from the N-terminus, the 84-residue chain is Antitoxin VapB30 (84 aa).

Its function is as follows. Antitoxin component of a type II toxin-antitoxin (TA) system. Upon expression in M.smegmatis neutralizes the effect of cognate toxin VapC30. The protein is Antitoxin VapB30 (vapB30) of Mycobacterium tuberculosis (strain ATCC 25618 / H37Rv).